Consider the following 219-residue polypeptide: Uracil-DNA glycosylase (219 aa).

Aspartate 59 (proton acceptor) is an active-site residue.

Belongs to the uracil-DNA glycosylase (UDG) superfamily. UNG family.

The protein resides in the cytoplasm. The catalysed reaction is Hydrolyzes single-stranded DNA or mismatched double-stranded DNA and polynucleotides, releasing free uracil.. Excises uracil residues from the DNA which can arise as a result of misincorporation of dUMP residues by DNA polymerase or due to deamination of cytosine. In Staphylococcus haemolyticus (strain JCSC1435), this protein is Uracil-DNA glycosylase.